Consider the following 629-residue polypeptide: Arginine--tRNA ligase (629 aa).

The short motif at 128 to 138 (VNPTKPLHMGH) is the 'HIGH' region element.

Belongs to the class-I aminoacyl-tRNA synthetase family.

It localises to the cytoplasm. The enzyme catalyses tRNA(Arg) + L-arginine + ATP = L-arginyl-tRNA(Arg) + AMP + diphosphate. The sequence is that of Arginine--tRNA ligase from Pyrococcus furiosus (strain ATCC 43587 / DSM 3638 / JCM 8422 / Vc1).